The sequence spans 129 residues: Transcriptional regulator WhiB2 (129 aa).

The segment at 23–45 (SHAPHIDTGSTPTGAAGRPQLSL) is disordered. A 4Fe-4S Wbl-type domain is found at 66–123 (LCAQTDPEAFFPEKGGSTREAKRICQGCEVRDACLEYALAHDERFGIWGGLSERERRR). [4Fe-4S] cluster-binding residues include C67, C90, C93, and C99.

Belongs to the WhiB family. [4Fe-4S] cluster is required as a cofactor. In terms of processing, the Fe-S cluster can be nitrosylated by nitric oxide (NO). Upon Fe-S cluster removal intramolecular disulfide bonds are formed.

The protein resides in the cytoplasm. Functionally, acts as a transcriptional regulator. Probably redox-responsive. The apo- but not holo-form probably binds DNA. In Mycolicibacterium smegmatis (strain ATCC 700084 / mc(2)155) (Mycobacterium smegmatis), this protein is Transcriptional regulator WhiB2 (whiB2).